Consider the following 141-residue polypeptide: Nucleoside diphosphate kinase (141 aa).

ATP contacts are provided by Lys11, Phe59, Arg87, Thr93, Arg104, and Asn114. The Pros-phosphohistidine intermediate role is filled by His117.

Belongs to the NDK family. In terms of assembly, homotetramer. Requires Mg(2+) as cofactor.

It localises to the cytoplasm. It carries out the reaction a 2'-deoxyribonucleoside 5'-diphosphate + ATP = a 2'-deoxyribonucleoside 5'-triphosphate + ADP. The enzyme catalyses a ribonucleoside 5'-diphosphate + ATP = a ribonucleoside 5'-triphosphate + ADP. Its function is as follows. Major role in the synthesis of nucleoside triphosphates other than ATP. The ATP gamma phosphate is transferred to the NDP beta phosphate via a ping-pong mechanism, using a phosphorylated active-site intermediate. This is Nucleoside diphosphate kinase from Xylella fastidiosa (strain M23).